Consider the following 386-residue polypeptide: Palmitoyltransferase ZDHHC9 (386 aa).

At 1-35 (MSAVMITRKITRKWEKLPGKNTFCCDGRVMMARQK) the chain is on the cytoplasmic side. Residues 36 to 56 (GVFYLTLFLIVGTCSLFFAFE) form a helical membrane-spanning segment. The Lumenal portion of the chain corresponds to 57 to 63 (CPYLAVH). Residues 64–84 (LSPAIPVFAVLLFVFVMAMLL) form a helical membrane-spanning segment. Topologically, residues 85–183 (RTSFSDPGVL…NCVGKRNYRY (99 aa)) are cytoplasmic. The 51-residue stretch at 139 to 189 (KYCYTCKIFRPPRASHCSICDNCVDRFDHHCPWVGNCVGKRNYRYFYLFTL) folds into the DHHC domain. The active-site S-palmitoyl cysteine intermediate is Cys169. A helical membrane pass occupies residues 184–204 (FYLFTLSLSLLTIYIFAFDIV). The Lumenal portion of the chain corresponds to 205–224 (HVVLRSVDSGFVNTLKETPG). A helical transmembrane segment spans residues 225–245 (TVLEVLVCFFTLWSVVGLTGF). Residues 246-386 (HTYLISLNQT…APAVIKESTH (141 aa)) are Cytoplasmic-facing. A compositionally biased stretch (polar residues) spans 306–334 (SCSSAPSNGATTVPVNKSSNPATQTTKSS). The disordered stretch occupies residues 306-386 (SCSSAPSNGA…APAVIKESTH (81 aa)).

Belongs to the DHHC palmitoyltransferase family. ERF2/ZDHHC9 subfamily.

Its subcellular location is the endoplasmic reticulum membrane. It is found in the golgi apparatus membrane. The catalysed reaction is L-cysteinyl-[protein] + hexadecanoyl-CoA = S-hexadecanoyl-L-cysteinyl-[protein] + CoA. Functionally, palmitoyltransferase that catalyzes the addition of palmitate onto various protein substrates, such as ADRB2, GSDMD, HRAS, NRAS and CGAS. This Danio rerio (Zebrafish) protein is Palmitoyltransferase ZDHHC9.